A 247-amino-acid chain; its full sequence is ATP synthase subunit a, chloroplastic (247 aa).

A run of 5 helical transmembrane segments spans residues 38–58 (QVLITSWVVIAILLGSTILVV), 95–115 (VPFIGTLFLFIFVSNWSGALL), 134–154 (INTTVALALLTSVAYFYAGIS), 199–219 (LVVVVLVSLVPLVVPIPVMFL), and 220–240 (GLFTSGIQALIFATLAAAYIG).

Belongs to the ATPase A chain family. F-type ATPases have 2 components, CF(1) - the catalytic core - and CF(0) - the membrane proton channel. CF(1) has five subunits: alpha(3), beta(3), gamma(1), delta(1), epsilon(1). CF(0) has four main subunits: a, b, b' and c.

It is found in the plastid. It localises to the chloroplast thylakoid membrane. Functionally, key component of the proton channel; it plays a direct role in the translocation of protons across the membrane. The chain is ATP synthase subunit a, chloroplastic from Lotus japonicus (Lotus corniculatus var. japonicus).